The primary structure comprises 505 residues: L-carnitine/gamma-butyrobetaine antiporter (505 aa).

12 helical membrane-spanning segments follow: residues 10 to 30 (IEPK…WLTV), 51 to 71 (WGWA…WLVF), 92 to 112 (IFMM…SIEI), 143 to 163 (GPLP…FFFV), 195 to 215 (FYLV…TPLV), 231 to 251 (LDAI…ACGL), 263 to 283 (SYLS…SFIM), 316 to 336 (WTVF…IFLA), 347 to 367 (LCFG…TVLG), 403 to 423 (LSTA…VTLI), 446 to 466 (LLVR…LLAL), and 475 to 495 (AIIA…LSFI).

This sequence belongs to the BCCT transporter (TC 2.A.15) family. CaiT subfamily. In terms of assembly, homotrimer.

It is found in the cell inner membrane. The enzyme catalyses 4-(trimethylamino)butanoate(in) + (R)-carnitine(out) = 4-(trimethylamino)butanoate(out) + (R)-carnitine(in). It participates in amine and polyamine metabolism; carnitine metabolism. Its function is as follows. Catalyzes the exchange of L-carnitine for gamma-butyrobetaine. The chain is L-carnitine/gamma-butyrobetaine antiporter from Salmonella gallinarum (strain 287/91 / NCTC 13346).